The chain runs to 701 residues: Glycine--tRNA ligase beta subunit (701 aa).

The protein belongs to the class-II aminoacyl-tRNA synthetase family. In terms of assembly, tetramer of two alpha and two beta subunits.

The protein resides in the cytoplasm. The enzyme catalyses tRNA(Gly) + glycine + ATP = glycyl-tRNA(Gly) + AMP + diphosphate. The polypeptide is Glycine--tRNA ligase beta subunit (Bradyrhizobium sp. (strain BTAi1 / ATCC BAA-1182)).